Reading from the N-terminus, the 710-residue chain is Interferon-induced GTP-binding protein Mx2 (710 aa).

Residues 1-51 (MSMSFRPLKYKRHTQTSTQHHPKQDIYFHQQPPGPPLGQTMSPPQWQVEES) form a disordered region. Residues 39–50 (QTMSPPQWQVEE) are compositionally biased toward polar residues. The 272-residue stretch at 112–383 (DLALPAIAVI…LIWHINKSLP (272 aa)) folds into the Dynamin-type G domain. Positions 122-129 (GDQSSGKS) are G1 motif. 122–129 (GDQSSGKS) contributes to the GTP binding site. A G2 motif region spans residues 147-149 (ITR). The segment at 221-224 (DLPG) is G3 motif. Residues 221–225 (DLPGI) and 290–293 (TKPD) contribute to the GTP site. The G4 motif stretch occupies residues 290–293 (TKPD). Residues 322 to 325 (KCRG) form a G5 motif region. The region spanning 619-710 (IVEIGVHLNA…ALYEFPHFKG (92 aa)) is the GED domain.

Belongs to the TRAFAC class dynamin-like GTPase superfamily. Dynamin/Fzo/YdjA family.

It localises to the cytoplasm. Its subcellular location is the nucleus. Functionally, interferon-induced dynamin-like GTPase with antiviral activity against vesicular stomatitis virus (VSV). In Bos taurus (Bovine), this protein is Interferon-induced GTP-binding protein Mx2 (MX2).